Here is a 322-residue protein sequence, read N- to C-terminus: Uracil-DNA glycosylase (322 aa).

Aspartate 142 (proton acceptor) is an active-site residue.

Belongs to the uracil-DNA glycosylase (UDG) superfamily. UNG family.

The protein resides in the mitochondrion. Its subcellular location is the nucleus. It carries out the reaction Hydrolyzes single-stranded DNA or mismatched double-stranded DNA and polynucleotides, releasing free uracil.. In terms of biological role, excises uracil residues from the DNA which can arise as a result of misincorporation of dUMP residues by DNA polymerase or due to deamination of cytosine. This Schizosaccharomyces pombe (strain 972 / ATCC 24843) (Fission yeast) protein is Uracil-DNA glycosylase (ung1).